We begin with the raw amino-acid sequence, 1665 residues long: Mediator of RNA polymerase II transcription subunit 13 (1665 aa).

Disordered stretches follow at residues 411–460 (KETE…IDKN), 482–512 (INLD…ETKP), 551–580 (TVSQ…GTET), and 673–781 (LDSS…NQIS). Positions 415–445 (PENESENDMEIDDLFGGDESDDNDDLEEAGN) are enriched in acidic residues. The segment covering 499-512 (VPDKENFKPKETKP) has biased composition (basic and acidic residues). The segment covering 551–568 (TVSQSAVTTNPPSVGSAP) has biased composition (low complexity). Positions 682–720 (EGGEDIEDDDNDYEDEGDDDEEEEGEEEEEEESDEDEIS) are enriched in acidic residues. Polar residues predominate over residues 728–762 (LKLNTQNESVPPQQSNYNPVNITDSGSNTTNNITD).

This sequence belongs to the Mediator complex subunit 13 family. As to quaternary structure, component of the SRB8-11 complex, which itself associates with the Mediator complex.

The protein resides in the nucleus. Functionally, component of the SRB8-11 complex. The SRB8-11 complex is a regulatory module of the Mediator complex which is itself involved in regulation of basal and activated RNA polymerase II-dependent transcription. The SRB8-11 complex may be involved in the transcriptional repression of a subset of genes regulated by Mediator. It may inhibit the association of the Mediator complex with RNA polymerase II to form the holoenzyme complex. The polypeptide is Mediator of RNA polymerase II transcription subunit 13 (SSN2) (Candida albicans (strain SC5314 / ATCC MYA-2876) (Yeast)).